Here is a 406-residue protein sequence, read N- to C-terminus: 12S rRNA N(4)-cytidine methyltransferase METTL15 (406 aa).

The transit peptide at 1-22 directs the protein to the mitochondrion; the sequence is MLRYPYFYRTYNRLFSHFVDSG. S-adenosyl-L-methionine contacts are provided by residues 100–102, Asp119, Phe146, Asp169, and Gln176; that span reads GGH. Ser358 bears the Phosphoserine mark.

The protein belongs to the methyltransferase superfamily. RsmH family.

It is found in the mitochondrion matrix. It carries out the reaction cytidine(839) in 12S rRNA + S-adenosyl-L-methionine = N(4)-methylcytidine(839) in 12S rRNA + S-adenosyl-L-homocysteine + H(+). Its function is as follows. N4-methylcytidine (m4C) methyltransferase responsible for the methylation of position C839 in mitochondrial 12S rRNA. Involved in the stabilization of 12S rRNA folding, therefore facilitating the assembly of the mitochondrial small ribosomal subunits. This is 12S rRNA N(4)-cytidine methyltransferase METTL15 from Mus musculus (Mouse).